We begin with the raw amino-acid sequence, 421 residues long: SH2 domain-containing protein 4A (421 aa).

2 positions are modified to phosphoserine: S117 and S123. Positions 132-271 (DLQAMKKTEP…FLQPLGIPPK (140 aa)) are disordered. Composition is skewed to basic and acidic residues over residues 163 to 201 (TRKD…KEDS) and 211 to 230 (KAAD…DYKR). At S232 the chain carries Phosphoserine. The region spanning 315-407 (WFHGILTLKK…LGKELLLYPC (93 aa)) is the SH2 domain.

Interacts with ESR1. In the kidney, expressed only in the glomerulus. Expressed in T-cells, B-cells, macrophages and dendritic cells (at protein level). In adult, highest levels are found in muscle and lung with lower levels in kidney.

Its subcellular location is the cytoplasm. In terms of biological role, inhibits estrogen-induced cell proliferation by competing with PLCG for binding to ESR1, blocking the effect of estrogen on PLCG and repressing estrogen-induced proliferation. May play a role in T-cell development and function. This chain is SH2 domain-containing protein 4A (Sh2d4a), found in Mus musculus (Mouse).